A 328-amino-acid polypeptide reads, in one-letter code: MNTRGNYSNGFTSKFFKPYLPSESGDDLVLPISFNSCLPKSLPKTVTVRSISGNIWKLGFKKCGGEVERFVMVSGWKKIVRDENLNGGDLLSFEFDGSHFFNFSIFDHETTCKRLKRSSEQSKDIIKVGSDCEEESQASDDVIVLNSDDSDDSDNDYSVEDDNVAEDDDGLEDEVDVEAEDGYDAKDSDGLEDEDDDEAEDGYDAKDDDGLEDEDDLEDEDDERRYLDDHENPYFTMTLNPKKKSQLHIPAHVIRDYDLTFPERITVVDEMGALEKAIKIQKNGCIFVKGFGSFIRRNKMKMTDKMICELKRTGGNLVHTIKVKIISG.

The TF-B3 DNA-binding region spans 13–109 (SKFFKPYLPS…FFNFSIFDHE (97 aa)). The interval 145–221 (LNSDDSDDSD…EDEDDLEDED (77 aa)) is disordered. Acidic residues-rich tracts occupy residues 148-182 (DDSDDSDNDYSVEDDNVAEDDDGLEDEVDVEAEDG) and 190-221 (GLEDEDDDEAEDGYDAKDDDGLEDEDDLEDED).

It is found in the nucleus. This is B3 domain-containing protein At5g60140 from Arabidopsis thaliana (Mouse-ear cress).